Consider the following 506-residue polypeptide: Anaerobic nitric oxide reductase transcription regulator NorR (506 aa).

D57 is modified (4-aspartylphosphate). The Sigma-54 factor interaction domain maps to 187-416 (MIGLSPAMTQ…LEHAIHRAVV (230 aa)). ATP-binding positions include 215–222 (GETGTGKE) and 278–287 (ADNGTLFLDE). Positions 481-500 (WAASARALETDVANLHRLAK) form a DNA-binding region, H-T-H motif.

The protein operates within nitrogen metabolism; nitric oxide reduction. Required for the expression of anaerobic nitric oxide (NO) reductase, acts as a transcriptional activator for at least the norVW operon. Activation also requires sigma-54. The chain is Anaerobic nitric oxide reductase transcription regulator NorR from Salmonella arizonae (strain ATCC BAA-731 / CDC346-86 / RSK2980).